The primary structure comprises 414 residues: tRNA(Ile)-lysidine synthase (414 aa).

13–18 (SGGIDS) contacts ATP.

It belongs to the tRNA(Ile)-lysidine synthase family.

It localises to the cytoplasm. It catalyses the reaction cytidine(34) in tRNA(Ile2) + L-lysine + ATP = lysidine(34) in tRNA(Ile2) + AMP + diphosphate + H(+). Ligates lysine onto the cytidine present at position 34 of the AUA codon-specific tRNA(Ile) that contains the anticodon CAU, in an ATP-dependent manner. Cytidine is converted to lysidine, thus changing the amino acid specificity of the tRNA from methionine to isoleucine. This chain is tRNA(Ile)-lysidine synthase, found in Thermotoga maritima (strain ATCC 43589 / DSM 3109 / JCM 10099 / NBRC 100826 / MSB8).